The sequence spans 303 residues: E3 ubiquitin-protein ligase CCNB1IP1 homolog (303 aa).

An RING-type; degenerate zinc finger spans residues 3-42 (CNACWRELEGQAVSTTCGHLLCTEDAKKILSNDAACPICD). Residues 119–184 (LEEVHTAYQK…YESAKRSAIQ (66 aa)) are a coiled coil. Positions 201–268 (VPNIMDSSDP…DIRPRQPARP (68 aa)) are disordered.

As to quaternary structure, interacts with ZIP4 and PTD. As to expression, expressed in young panicles.

The protein resides in the nucleus. It localises to the chromosome. The catalysed reaction is S-ubiquitinyl-[E2 ubiquitin-conjugating enzyme]-L-cysteine + [acceptor protein]-L-lysine = [E2 ubiquitin-conjugating enzyme]-L-cysteine + N(6)-ubiquitinyl-[acceptor protein]-L-lysine.. It participates in protein modification; protein ubiquitination. Functionally, ubiquitin E3 ligase required for class I crossover (CO) formation during meiosis. The polypeptide is E3 ubiquitin-protein ligase CCNB1IP1 homolog (Oryza sativa subsp. japonica (Rice)).